The primary structure comprises 322 residues: Tetraacyldisaccharide 4'-kinase (322 aa).

54–61 contributes to the ATP binding site; that stretch reads SVGGTGKT.

The protein belongs to the LpxK family.

It catalyses the reaction a lipid A disaccharide + ATP = a lipid IVA + ADP + H(+). Its pathway is glycolipid biosynthesis; lipid IV(A) biosynthesis; lipid IV(A) from (3R)-3-hydroxytetradecanoyl-[acyl-carrier-protein] and UDP-N-acetyl-alpha-D-glucosamine: step 6/6. Functionally, transfers the gamma-phosphate of ATP to the 4'-position of a tetraacyldisaccharide 1-phosphate intermediate (termed DS-1-P) to form tetraacyldisaccharide 1,4'-bis-phosphate (lipid IVA). The polypeptide is Tetraacyldisaccharide 4'-kinase (Francisella tularensis subsp. tularensis (strain FSC 198)).